Here is a 360-residue protein sequence, read N- to C-terminus: Chorismate synthase (360 aa).

2 residues coordinate NADP(+): arginine 48 and arginine 54. Residues 125-127 (RSS), 246-247 (NA), glycine 286, 301-305 (KPTSS), and arginine 327 each bind FMN.

This sequence belongs to the chorismate synthase family. Homotetramer. The cofactor is FMNH2.

It catalyses the reaction 5-O-(1-carboxyvinyl)-3-phosphoshikimate = chorismate + phosphate. It functions in the pathway metabolic intermediate biosynthesis; chorismate biosynthesis; chorismate from D-erythrose 4-phosphate and phosphoenolpyruvate: step 7/7. Its function is as follows. Catalyzes the anti-1,4-elimination of the C-3 phosphate and the C-6 proR hydrogen from 5-enolpyruvylshikimate-3-phosphate (EPSP) to yield chorismate, which is the branch point compound that serves as the starting substrate for the three terminal pathways of aromatic amino acid biosynthesis. This reaction introduces a second double bond into the aromatic ring system. The chain is Chorismate synthase from Actinobacillus pleuropneumoniae serotype 5b (strain L20).